We begin with the raw amino-acid sequence, 109 residues long: COX assembly mitochondrial protein 2 (109 aa).

The CHCH domain maps to Phe10–Asn54. 2 consecutive short sequence motifs (cx9C motif) follow at residues Cys13 to Cys23 and Cys36 to Cys46. 2 disulfides stabilise this stretch: Cys13–Cys46 and Cys23–Cys36.

The protein belongs to the CMC family. Interacts with CMC1.

The protein localises to the mitochondrion inner membrane. The protein resides in the mitochondrion intermembrane space. Functionally, required for mitochondrial cytochrome c oxidase (COX) assembly and respiration. May be involved in copper trafficking and distribution to mitochondrial COX and SOD1. This Saccharomyces cerevisiae (strain ATCC 204508 / S288c) (Baker's yeast) protein is COX assembly mitochondrial protein 2 (CMC2).